The chain runs to 319 residues: MTNSSTFCPVYRDLEPFTYFFYLVFLIGIIGSCFATWAFIQKNTNHRCVSIYLINLLTADFLLTLALPVKITVDLGVAPWKLRIFHCQVTACLIYINMYLSIIFLAFVSIDRCLQLTYSCKIYRIQEPGFAKMISAVVWLMVLLIMVPNMIIPIKDIKEKPNVGCMEFKSEFGRNWHLLTNFISIAIFFNFSAIILISNCLVIRQLYRNKDNENYPNVKRALISILLVTTGYIICFVPYHIVRIPYTLSQTEVISDCSTRISLFKAKEATLLLAVSNLCFDPILYYHLSKAFRLKITETFASHKESKAQKEKPRSENNA.

The Extracellular portion of the chain corresponds to 1–21; that stretch reads MTNSSTFCPVYRDLEPFTYFF. Asparagine 3 is a glycosylation site (N-linked (GlcNAc...) asparagine). Residues 22-42 traverse the membrane as a helical segment; the sequence is YLVFLIGIIGSCFATWAFIQK. Topologically, residues 43–48 are cytoplasmic; that stretch reads NTNHRC. The helical transmembrane segment at 49 to 69 threads the bilayer; it reads VSIYLINLLTADFLLTLALPV. Residues 70-89 are Extracellular-facing; the sequence is KITVDLGVAPWKLRIFHCQV. A helical membrane pass occupies residues 90–110; the sequence is TACLIYINMYLSIIFLAFVSI. Over 111–132 the chain is Cytoplasmic; sequence DRCLQLTYSCKIYRIQEPGFAK. Residues 133–153 traverse the membrane as a helical segment; the sequence is MISAVVWLMVLLIMVPNMIIP. Residues 154-181 are Extracellular-facing; that stretch reads IKDIKEKPNVGCMEFKSEFGRNWHLLTN. Residues 182–202 form a helical membrane-spanning segment; the sequence is FISIAIFFNFSAIILISNCLV. Topologically, residues 203–224 are cytoplasmic; it reads IRQLYRNKDNENYPNVKRALIS. The helical transmembrane segment at 225–245 threads the bilayer; it reads ILLVTTGYIICFVPYHIVRIP. Topologically, residues 246 to 268 are extracellular; that stretch reads YTLSQTEVISDCSTRISLFKAKE. Residues 269–289 form a helical membrane-spanning segment; it reads ATLLLAVSNLCFDPILYYHLS. Residues 290–319 lie on the Cytoplasmic side of the membrane; the sequence is KAFRLKITETFASHKESKAQKEKPRSENNA.

This sequence belongs to the G-protein coupled receptor 1 family.

The protein localises to the cell membrane. Its function is as follows. G-protein coupled receptor for Big LEN, a 16-amino acid neuropeptide produced from the precursor protein, proSAAS (encoded by PCSK1N). Acts through a G(i)-alpha-mediated pathway in response to bigLEN. Big LEN-GPR171 system plays an important role in regulating feeding and metabolism. Also plays a role in modulating fear and anxiety-like behaviors in the basolateral amygdala. Big LEN-GPR171 modulates the mu-type opioid receptor signaling and antinociception. Acts as a negative regulator T cell function. This chain is G-protein coupled receptor 171 (GPR171), found in Bos taurus (Bovine).